Here is a 59-residue protein sequence, read N- to C-terminus: UPF0391 membrane protein lpg2521 (59 aa).

Transmembrane regions (helical) follow at residues 5-25 (ALIFFIIAIIAAAFGFGGIAV) and 30-50 (IAKILFFLFLVMFVIFLIMGL).

The protein belongs to the UPF0391 family.

The protein localises to the cell membrane. The polypeptide is UPF0391 membrane protein lpg2521 (Legionella pneumophila subsp. pneumophila (strain Philadelphia 1 / ATCC 33152 / DSM 7513)).